The primary structure comprises 185 residues: Lectin B4 (185 aa).

Asparagine 48 is a glycosylation site (N-linked (GlcNAc...) asparagine). Positions 111 and 113 each coordinate Mn(2+). Ca(2+) contacts are provided by aspartate 113, tyrosine 115, asparagine 117, and aspartate 120. Aspartate 120 provides a ligand contact to Mn(2+). Asparagine 122 carries an N-linked (GlcNAc...) asparagine glycan. Mn(2+) is bound at residue histidine 125.

This sequence belongs to the leguminous lectin family. As to quaternary structure, homo- or heterotetramer. V.villosa isolectins are composed of either two subunits a and two subunits B (A2B2), four subunits A (A4), or four subunits B (B4). The predominant form, isolectin B4, has no A1 erythrocyte agglutinating activity.

N-acetyl-D-galactosamine specific lectin. Binds the Tn determinant (GalNAc-alpha-O-Ser/Thr) of the tumor-associated glycopeptide. Could be required for agglutinating cells such as Tn-exposed erythrocytes. This chain is Lectin B4, found in Vicia villosa (Hairy vetch).